Consider the following 238-residue polypeptide: Probable transcriptional regulatory protein Mmwyl1_2868 (238 aa).

The protein belongs to the TACO1 family.

The protein resides in the cytoplasm. In Marinomonas sp. (strain MWYL1), this protein is Probable transcriptional regulatory protein Mmwyl1_2868.